The sequence spans 207 residues: Holliday junction branch migration complex subunit RuvA (207 aa).

A domain I region spans residues 1–64 (MIGRLTGILA…ETSQQLFGFS (64 aa)). The tract at residues 65–142 (SQQDRELFRM…ALDTTPSEHS (78 aa)) is domain II. Residues 143-157 (PTGEGAGIVRVDPVI) form a flexible linker region. Residues 158–207 (NTNVIIADAESALIGLGYKPTEAAKAVSAAYNDTITTSEDLIRAALKGMI) form a domain III region.

This sequence belongs to the RuvA family. In terms of assembly, homotetramer. Forms an RuvA(8)-RuvB(12)-Holliday junction (HJ) complex. HJ DNA is sandwiched between 2 RuvA tetramers; dsDNA enters through RuvA and exits via RuvB. An RuvB hexamer assembles on each DNA strand where it exits the tetramer. Each RuvB hexamer is contacted by two RuvA subunits (via domain III) on 2 adjacent RuvB subunits; this complex drives branch migration. In the full resolvosome a probable DNA-RuvA(4)-RuvB(12)-RuvC(2) complex forms which resolves the HJ.

The protein localises to the cytoplasm. Its function is as follows. The RuvA-RuvB-RuvC complex processes Holliday junction (HJ) DNA during genetic recombination and DNA repair, while the RuvA-RuvB complex plays an important role in the rescue of blocked DNA replication forks via replication fork reversal (RFR). RuvA specifically binds to HJ cruciform DNA, conferring on it an open structure. The RuvB hexamer acts as an ATP-dependent pump, pulling dsDNA into and through the RuvAB complex. HJ branch migration allows RuvC to scan DNA until it finds its consensus sequence, where it cleaves and resolves the cruciform DNA. This is Holliday junction branch migration complex subunit RuvA from Saccharophagus degradans (strain 2-40 / ATCC 43961 / DSM 17024).